A 282-amino-acid chain; its full sequence is MIPWNAYVRLLRLNKPIGILLLWYPTAWALWMANQGFPSIDLLMIFLLGTVFMRSAGCVINDIADRHIDRHVARTQFRPLTAGEVSLSEAFILLFILLCASLLLLLKLPINCFYFAVISVLITFLYPFCKRFLNAPQLILGLAFSMGIPMAFIASGKNLNSDFIVLFLINFSWIIAYDTMYAMTDKADDLKIGVKSTAIYFASYDRLIIALLLIFLHSLWLVWAINKNAEWFFYLLWCTAAGILTYQLKLIYARIPKNCFKAFLVSGYYGLVMWFAVGLALI.

Helical transmembrane passes span 17–37 (IGIL…NQGF), 40–60 (IDLL…GCVI), 90–110 (AFIL…KLPI), 113–133 (FYFA…KRFL), 135–155 (APQL…FIAS), 163–183 (FIVL…MYAM), 207–227 (LIIA…AINK), 231–251 (WFFY…LKLI), and 262–282 (AFLV…LALI).

This sequence belongs to the UbiA prenyltransferase family. Mg(2+) is required as a cofactor.

The protein resides in the cell inner membrane. The enzyme catalyses all-trans-octaprenyl diphosphate + 4-hydroxybenzoate = 4-hydroxy-3-(all-trans-octaprenyl)benzoate + diphosphate. It functions in the pathway cofactor biosynthesis; ubiquinone biosynthesis. Functionally, catalyzes the prenylation of para-hydroxybenzoate (PHB) with an all-trans polyprenyl group. Mediates the second step in the final reaction sequence of ubiquinone-8 (UQ-8) biosynthesis, which is the condensation of the polyisoprenoid side chain with PHB, generating the first membrane-bound Q intermediate 3-octaprenyl-4-hydroxybenzoate. The sequence is that of 4-hydroxybenzoate octaprenyltransferase from Legionella pneumophila subsp. pneumophila (strain Philadelphia 1 / ATCC 33152 / DSM 7513).